We begin with the raw amino-acid sequence, 596 residues long: NADH-quinone oxidoreductase subunit C/D (596 aa).

The tract at residues 1–186 (MTDLTAQDAA…DPFELTKAKQ (186 aa)) is NADH dehydrogenase I subunit C. An NADH dehydrogenase I subunit D region spans residues 210-596 (DFMFLNLGPN…IDFVMSDVDR (387 aa)).

In the N-terminal section; belongs to the complex I 30 kDa subunit family. It in the C-terminal section; belongs to the complex I 49 kDa subunit family. As to quaternary structure, NDH-1 is composed of 13 different subunits. Subunits NuoB, CD, E, F, and G constitute the peripheral sector of the complex.

Its subcellular location is the cell inner membrane. It catalyses the reaction a quinone + NADH + 5 H(+)(in) = a quinol + NAD(+) + 4 H(+)(out). Functionally, NDH-1 shuttles electrons from NADH, via FMN and iron-sulfur (Fe-S) centers, to quinones in the respiratory chain. The immediate electron acceptor for the enzyme in this species is believed to be ubiquinone. Couples the redox reaction to proton translocation (for every two electrons transferred, four hydrogen ions are translocated across the cytoplasmic membrane), and thus conserves the redox energy in a proton gradient. In Salmonella choleraesuis (strain SC-B67), this protein is NADH-quinone oxidoreductase subunit C/D.